The following is a 261-amino-acid chain: 3-methyl-2-oxobutanoate hydroxymethyltransferase (261 aa).

Asp-42 and Asp-81 together coordinate Mg(2+). Residues 42–43, Asp-81, and Lys-110 contribute to the 3-methyl-2-oxobutanoate site; that span reads DS. Glu-112 contributes to the Mg(2+) binding site. The Proton acceptor role is filled by Glu-179.

Belongs to the PanB family. In terms of assembly, homodecamer; pentamer of dimers. It depends on Mg(2+) as a cofactor.

Its subcellular location is the cytoplasm. It catalyses the reaction 3-methyl-2-oxobutanoate + (6R)-5,10-methylene-5,6,7,8-tetrahydrofolate + H2O = 2-dehydropantoate + (6S)-5,6,7,8-tetrahydrofolate. It functions in the pathway cofactor biosynthesis; (R)-pantothenate biosynthesis; (R)-pantoate from 3-methyl-2-oxobutanoate: step 1/2. Catalyzes the reversible reaction in which hydroxymethyl group from 5,10-methylenetetrahydrofolate is transferred onto alpha-ketoisovalerate to form ketopantoate. The polypeptide is 3-methyl-2-oxobutanoate hydroxymethyltransferase (Thermus thermophilus (strain ATCC 27634 / DSM 579 / HB8)).